Consider the following 84-residue polypeptide: MSSDNQSKTLIGQVVSDKRDKTVTVRIDRKVKHPLYGKIVTRSSKYHAHDELNQYKLGDIVAISETRPKSKTKAWQVVRVIKVN.

Belongs to the universal ribosomal protein uS17 family. In terms of assembly, part of the 30S ribosomal subunit.

One of the primary rRNA binding proteins, it binds specifically to the 5'-end of 16S ribosomal RNA. The protein is Small ribosomal subunit protein uS17 of Nitrosomonas europaea (strain ATCC 19718 / CIP 103999 / KCTC 2705 / NBRC 14298).